The following is a 564-amino-acid chain: Pyruvate decarboxylase (564 aa).

The pyruvate site is built by Asp28 and His115. Thiamine diphosphate contacts are provided by residues Thr390 and Gly413–Ile415. Asp444 is a Mg(2+) binding site. Thiamine diphosphate contacts are provided by residues Gly445 to Ser446 and Asn471 to Ile476. Asn471 and Gly473 together coordinate Mg(2+). Glu477 contacts pyruvate.

This sequence belongs to the TPP enzyme family. As to quaternary structure, homotetramer. Mg(2+) is required as a cofactor. Thiamine diphosphate serves as cofactor.

The enzyme catalyses a 2-oxocarboxylate + H(+) = an aldehyde + CO2. It carries out the reaction pyruvate + H(+) = acetaldehyde + CO2. The polypeptide is Pyruvate decarboxylase (PDC1) (Kluyveromyces marxianus (Yeast)).